Here is a 175-residue protein sequence, read N- to C-terminus: Large ribosomal subunit protein uL6 (175 aa).

This sequence belongs to the universal ribosomal protein uL6 family. As to quaternary structure, part of the 50S ribosomal subunit.

Its function is as follows. This protein binds to the 23S rRNA, and is important in its secondary structure. It is located near the subunit interface in the base of the L7/L12 stalk, and near the tRNA binding site of the peptidyltransferase center. The protein is Large ribosomal subunit protein uL6 of Xanthomonas campestris pv. campestris (strain 8004).